The primary structure comprises 367 residues: tRNA-specific 2-thiouridylase MnmA (367 aa).

ATP-binding positions include 11 to 18 (GLSGGVDS) and Met37. The segment at 109–111 (NPD) is interaction with target base in tRNA. The active-site Nucleophile is Cys114. A disulfide bridge connects residues Cys114 and Cys211. Gly139 serves as a coordination point for ATP. The interval 161-163 (KDQ) is interaction with tRNA. Cys211 functions as the Cysteine persulfide intermediate in the catalytic mechanism.

It belongs to the MnmA/TRMU family.

Its subcellular location is the cytoplasm. The catalysed reaction is S-sulfanyl-L-cysteinyl-[protein] + uridine(34) in tRNA + AH2 + ATP = 2-thiouridine(34) in tRNA + L-cysteinyl-[protein] + A + AMP + diphosphate + H(+). Its function is as follows. Catalyzes the 2-thiolation of uridine at the wobble position (U34) of tRNA, leading to the formation of s(2)U34. This is tRNA-specific 2-thiouridylase MnmA from Mycoplasma genitalium (strain ATCC 33530 / DSM 19775 / NCTC 10195 / G37) (Mycoplasmoides genitalium).